We begin with the raw amino-acid sequence, 171 residues long: Spiderine-2a (171 aa).

Positions 1-18 (MKFALVLLGVCAFYLVNA) are cleaved as a signal peptide. A propeptide spans 19 to 58 (TGDLETELEASELQELQEALDLIAETPLESLEAEELEEAR) (removed in mature form). The tract at residues 59–104 (KFKLPKINWGKLASKAKDVYKKGQKLAKNKNVKKALKYGKQLAENL) is linear cationic cytotoxin domain. Residues 118–171 (NNKCWAIGTRCTDDCDCCPEHHCHCPAKSWTFGLIPCSCQVTESDKVNKCPPAE) form the Oxytoxin-type inhibitor cystine knot (ICK) domain. 5 cysteine pairs are disulfide-bonded: cysteine 121–cysteine 135, cysteine 128–cysteine 140, cysteine 132–cysteine 167, cysteine 134–cysteine 156, and cysteine 142–cysteine 154.

Disulfide bonds. Expressed by the venom gland.

The protein resides in the secreted. Its function is as follows. Has antimicrobial, insecticidal, cytolytic and cytotoxic activity. In Oxyopes takobius (Lynx spider), this protein is Spiderine-2a.